A 493-amino-acid polypeptide reads, in one-letter code: Anthranilate synthase component 1 (493 aa).

Residues serine 48 and proline 273 to methionine 275 each bind L-tryptophan. A chorismate-binding site is contributed by glycine 308–threonine 309. Glutamate 335 contacts Mg(2+). Residues tyrosine 423, arginine 443, glycine 457–glycine 459, and glycine 459 contribute to the chorismate site. Glutamate 472 contacts Mg(2+).

The protein belongs to the anthranilate synthase component I family. Heterotetramer consisting of two non-identical subunits: a beta subunit (TrpG) and a large alpha subunit (TrpE). Requires Mg(2+) as cofactor.

It catalyses the reaction chorismate + L-glutamine = anthranilate + pyruvate + L-glutamate + H(+). Its pathway is amino-acid biosynthesis; L-tryptophan biosynthesis; L-tryptophan from chorismate: step 1/5. Its activity is regulated as follows. Feedback inhibited by tryptophan. Its function is as follows. Part of a heterotetrameric complex that catalyzes the two-step biosynthesis of anthranilate, an intermediate in the biosynthesis of L-tryptophan. In the first step, the glutamine-binding beta subunit (TrpG) of anthranilate synthase (AS) provides the glutamine amidotransferase activity which generates ammonia as a substrate that, along with chorismate, is used in the second step, catalyzed by the large alpha subunit of AS (TrpE) to produce anthranilate. In the absence of TrpG, TrpE can synthesize anthranilate directly from chorismate and high concentrations of ammonia. In Pseudomonas putida (Arthrobacter siderocapsulatus), this protein is Anthranilate synthase component 1 (trpE).